The sequence spans 354 residues: MNTRRELPESPYLAAVAGRKPLRVPVWMMRQAGRSLPEYRALRAKNTMMQACFDADLITEITLQPVRRHGVDAAILFSDIVVPLRAAGIDLDIVPDVGPVIAQPVRTADDVAAIRPLEPSRVDPVATAIGRLVGELGDVPLIGFAGAPFTLASYLVEGGPSRNHERTKAMMLGETATWHALMTALTDITIAFLRAQVDAGVDAIQVFDSWAGTLSLADYRTYVLPHSARVFASLAGAGVPMTHFGVGTAELLGAMSEAVTGHGVPAMVGVDWRTSLTDAAARVRPGTALQGNLDPVVLLAGWPVVERAVRAVVEDGRRAVDAGAVGHVFNLGHGVLPATDPAVITDTVALVHEL.

Substrate contacts are provided by residues Arg-30–Arg-34, Asp-79, Tyr-154, Ser-209, and His-333.

It belongs to the uroporphyrinogen decarboxylase family. In terms of assembly, homodimer.

The protein resides in the cytoplasm. It catalyses the reaction uroporphyrinogen III + 4 H(+) = coproporphyrinogen III + 4 CO2. Its pathway is porphyrin-containing compound metabolism; protoporphyrin-IX biosynthesis; coproporphyrinogen-III from 5-aminolevulinate: step 4/4. Its function is as follows. Catalyzes the decarboxylation of four acetate groups of uroporphyrinogen-III to yield coproporphyrinogen-III. The polypeptide is Uroporphyrinogen decarboxylase (Mycolicibacterium vanbaalenii (strain DSM 7251 / JCM 13017 / BCRC 16820 / KCTC 9966 / NRRL B-24157 / PYR-1) (Mycobacterium vanbaalenii)).